A 227-amino-acid polypeptide reads, in one-letter code: Prolactin-4A1 (227 aa).

A signal peptide spans 1-31; that stretch reads MHLSLTPQWSSWTVLLLLVSNLLLWENTASA. 2 disulfide bridges follow: Cys-87-Cys-203 and Cys-220-Cys-227. Asn-175 is a glycosylation site (N-linked (GlcNAc...) asparagine).

Belongs to the somatotropin/prolactin family. Expressed specifically in placenta. Expressed in both trophoblast giant cells and spongiotrophoblast cells.

It localises to the secreted. This is Prolactin-4A1 (Prl4a1) from Mus musculus (Mouse).